We begin with the raw amino-acid sequence, 819 residues long: Leucine--tRNA ligase (819 aa).

Residues 40–51 carry the 'HIGH' region motif; that stretch reads PYPSGAGLHVGH. The 'KMSKS' region motif lies at 600-604; sequence KMSKS. K603 provides a ligand contact to ATP.

This sequence belongs to the class-I aminoacyl-tRNA synthetase family.

It localises to the cytoplasm. The catalysed reaction is tRNA(Leu) + L-leucine + ATP = L-leucyl-tRNA(Leu) + AMP + diphosphate. The polypeptide is Leucine--tRNA ligase (Chlamydia trachomatis serovar D (strain ATCC VR-885 / DSM 19411 / UW-3/Cx)).